The chain runs to 296 residues: NAD kinase (296 aa).

D72 acts as the Proton acceptor in catalysis. NAD(+) contacts are provided by residues 72-73 (DG), 146-147 (ND), R157, K174, D176, 187-192 (TAYALS), and Q247.

This sequence belongs to the NAD kinase family. It depends on a divalent metal cation as a cofactor.

The protein localises to the cytoplasm. It carries out the reaction NAD(+) + ATP = ADP + NADP(+) + H(+). In terms of biological role, involved in the regulation of the intracellular balance of NAD and NADP, and is a key enzyme in the biosynthesis of NADP. Catalyzes specifically the phosphorylation on 2'-hydroxyl of the adenosine moiety of NAD to yield NADP. This is NAD kinase from Pseudomonas savastanoi pv. phaseolicola (strain 1448A / Race 6) (Pseudomonas syringae pv. phaseolicola (strain 1448A / Race 6)).